We begin with the raw amino-acid sequence, 86 residues long: Small ribosomal subunit protein bS20 (86 aa).

The span at 1 to 11 (MANIKQQKKRN) shows a compositional bias: basic residues. The segment at 1-21 (MANIKQQKKRNKTNEKRRLQN) is disordered.

Belongs to the bacterial ribosomal protein bS20 family.

In terms of biological role, binds directly to 16S ribosomal RNA. The chain is Small ribosomal subunit protein bS20 from Onion yellows phytoplasma (strain OY-M).